Here is a 2382-residue protein sequence, read N- to C-terminus: Nonribosomal peptide synthetase chyA (2382 aa).

The interval 204 to 607 (QKCATQPESI…LGRKDHQVKI (404 aa)) is adenylation 1. Residues 745–821 (TPTTQNQRIL…DMASVLVKDH (77 aa)) form the Carrier 1 domain. Ser-782 carries the post-translational modification O-(pantetheine 4'-phosphoryl)serine. The condensation 1 stretch occupies residues 857–1269 (EDVYPCTHMQ…LVPPEDMATL (413 aa)). Residues 1294–1687 (GQPDTLAIHS…VGRKDDQVKL (394 aa)) are adenylation 2. Residues 1833 to 1909 (VPVSIHGRKV…GLSLKCATEN (77 aa)) enclose the Carrier 2 domain. An O-(pantetheine 4'-phosphoryl)serine modification is found at Ser-1870. The interval 1967 to 2373 (MTLHNFYSRY…FSDVIESLAS (407 aa)) is condensation 2.

The protein belongs to the NRP synthetase family.

It functions in the pathway pigment biosynthesis. In terms of biological role, nonribosomal peptide synthetase; part of the gene cluster that mediates the biosynthesis of the yellow pigment chrysogine. the NRPS chyA mediates the condensation of anthranilic acid and alanine into the intermediate 2-(2-aminopropanamido)benzoic acid. The remainder of the pathway is highly branched yielding at least 13 chrysogine-related compounds. The malonyl transferase chyE converts 2-(2-aminopropanamido)benzoic acid and 2-(2-aminopropanamido)benzamidine into 2-(2-(2-carboxyacetamido)propanamido)benzoic acid and 3-((1-((2-carbamoylphenyl)amino)-1-oxopropan-2-yl)amino)-3-oxopropanoic acid, respectively. ChyD is an amidase, being responsible for the amidation of the carboxylic acid moiety of 2-(2-aminopropanamido)benzoic acid, 2-(2-(2-carboxyacetamido)propanamido)benzoic acid and 2-(2-((4-amino-1-carboxy-4-oxobutyl)amino)propanamido)benzoic acid. ChyC is involved in the same reactions as ChyD, but plays a more minor role in the amidation reactions compared to chyD. The oxidoreductases chyH and chyM are involved in oxidation reactions that form N-pyruvoylanthranilamide from 2-(2-aminopropanamido)benzamidine and (1-((2-carbamoylphenyl)amino)-1-oxopropan-2-yl)glutamine, respectively. N-pyruvoylanthranilamide is further converted via two further branches in the pathway, yielding chrysogine and additional chrysogine-related coumpounds. Chrysogine is likely formed by a spontaneous ring closure from N-pyruvoylanthranilamide. The polypeptide is Nonribosomal peptide synthetase chyA (Penicillium rubens (strain ATCC 28089 / DSM 1075 / NRRL 1951 / Wisconsin 54-1255) (Penicillium chrysogenum)).